Reading from the N-terminus, the 151-residue chain is Macrodomain Ter protein (151 aa).

It belongs to the MatP family. As to quaternary structure, homodimer.

The protein localises to the cytoplasm. Required for spatial organization of the terminus region of the chromosome (Ter macrodomain) during the cell cycle. Prevents early segregation of duplicated Ter macrodomains during cell division. Binds specifically to matS, which is a 13 bp signature motif repeated within the Ter macrodomain. This chain is Macrodomain Ter protein, found in Yersinia enterocolitica serotype O:8 / biotype 1B (strain NCTC 13174 / 8081).